Here is a 323-residue protein sequence, read N- to C-terminus: tRNA dimethylallyltransferase (323 aa).

12-19 contacts ATP; it reads GPTAAGKT. 14–19 lines the substrate pocket; it reads TAAGKT. Interaction with substrate tRNA regions lie at residues 37–40 and 161–165; these read DSAL and QRLIR.

This sequence belongs to the IPP transferase family. In terms of assembly, monomer. It depends on Mg(2+) as a cofactor.

It carries out the reaction adenosine(37) in tRNA + dimethylallyl diphosphate = N(6)-dimethylallyladenosine(37) in tRNA + diphosphate. Functionally, catalyzes the transfer of a dimethylallyl group onto the adenine at position 37 in tRNAs that read codons beginning with uridine, leading to the formation of N6-(dimethylallyl)adenosine (i(6)A). The polypeptide is tRNA dimethylallyltransferase (Pseudomonas putida (strain W619)).